Reading from the N-terminus, the 149-residue chain is D-aminoacyl-tRNA deacylase (149 aa).

The Gly-cisPro motif, important for rejection of L-amino acids signature appears at 137–138 (GP).

It belongs to the DTD family. Homodimer.

Its subcellular location is the cytoplasm. The catalysed reaction is glycyl-tRNA(Ala) + H2O = tRNA(Ala) + glycine + H(+). It carries out the reaction a D-aminoacyl-tRNA + H2O = a tRNA + a D-alpha-amino acid + H(+). Its function is as follows. An aminoacyl-tRNA editing enzyme that deacylates mischarged D-aminoacyl-tRNAs. Also deacylates mischarged glycyl-tRNA(Ala), protecting cells against glycine mischarging by AlaRS. Acts via tRNA-based rather than protein-based catalysis; rejects L-amino acids rather than detecting D-amino acids in the active site. By recycling D-aminoacyl-tRNA to D-amino acids and free tRNA molecules, this enzyme counteracts the toxicity associated with the formation of D-aminoacyl-tRNA entities in vivo and helps enforce protein L-homochirality. In Desulforamulus reducens (strain ATCC BAA-1160 / DSM 100696 / MI-1) (Desulfotomaculum reducens), this protein is D-aminoacyl-tRNA deacylase.